A 303-amino-acid polypeptide reads, in one-letter code: Probable 5-dehydro-4-deoxyglucarate dehydratase (303 aa).

This sequence belongs to the DapA family.

The enzyme catalyses 5-dehydro-4-deoxy-D-glucarate + H(+) = 2,5-dioxopentanoate + CO2 + H2O. It functions in the pathway carbohydrate acid metabolism; D-glucarate degradation; 2,5-dioxopentanoate from D-glucarate: step 2/2. The polypeptide is Probable 5-dehydro-4-deoxyglucarate dehydratase (Acinetobacter baumannii (strain ATCC 17978 / DSM 105126 / CIP 53.77 / LMG 1025 / NCDC KC755 / 5377)).